Here is a 624-residue protein sequence, read N- to C-terminus: 1-deoxy-D-xylulose-5-phosphate synthase (624 aa).

Thiamine diphosphate contacts are provided by residues histidine 80 and 121–123 (GHS). Residue aspartate 152 coordinates Mg(2+). Thiamine diphosphate contacts are provided by residues 153 to 154 (GA), asparagine 181, tyrosine 288, and glutamate 370. Asparagine 181 contacts Mg(2+).

The protein belongs to the transketolase family. DXPS subfamily. As to quaternary structure, homodimer. It depends on Mg(2+) as a cofactor. Thiamine diphosphate serves as cofactor.

It carries out the reaction D-glyceraldehyde 3-phosphate + pyruvate + H(+) = 1-deoxy-D-xylulose 5-phosphate + CO2. Its pathway is metabolic intermediate biosynthesis; 1-deoxy-D-xylulose 5-phosphate biosynthesis; 1-deoxy-D-xylulose 5-phosphate from D-glyceraldehyde 3-phosphate and pyruvate: step 1/1. Functionally, catalyzes the acyloin condensation reaction between C atoms 2 and 3 of pyruvate and glyceraldehyde 3-phosphate to yield 1-deoxy-D-xylulose-5-phosphate (DXP). The protein is 1-deoxy-D-xylulose-5-phosphate synthase of Proteus mirabilis (strain HI4320).